Consider the following 270-residue polypeptide: Elongation factor Ts (270 aa).

The involved in Mg(2+) ion dislocation from EF-Tu stretch occupies residues 76 to 79; that stretch reads TDFV.

It belongs to the EF-Ts family.

It localises to the cytoplasm. Functionally, associates with the EF-Tu.GDP complex and induces the exchange of GDP to GTP. It remains bound to the aminoacyl-tRNA.EF-Tu.GTP complex up to the GTP hydrolysis stage on the ribosome. This chain is Elongation factor Ts, found in Corynebacterium aurimucosum (strain ATCC 700975 / DSM 44827 / CIP 107346 / CN-1) (Corynebacterium nigricans).